Consider the following 396-residue polypeptide: Ribosomal RNA large subunit methyltransferase I (396 aa).

One can recognise a PUA domain in the interval 2–81 (TVRLFLAKGR…EEINIEFFIR (80 aa)).

This sequence belongs to the methyltransferase superfamily. RlmI family.

The protein localises to the cytoplasm. It carries out the reaction cytidine(1962) in 23S rRNA + S-adenosyl-L-methionine = 5-methylcytidine(1962) in 23S rRNA + S-adenosyl-L-homocysteine + H(+). Functionally, specifically methylates the cytosine at position 1962 (m5C1962) of 23S rRNA. This chain is Ribosomal RNA large subunit methyltransferase I, found in Serratia proteamaculans (strain 568).